A 389-amino-acid chain; its full sequence is Arrestin-C (389 aa).

It belongs to the arrestin family. As to expression, retina and pineal gland.

In terms of biological role, may play a role in an as yet undefined retina-specific signal transduction. Could bind to photoactivated-phosphorylated red/green opsins. This Lithobates pipiens (Northern leopard frog) protein is Arrestin-C (arr3).